The following is a 236-amino-acid chain: 2,3,4,5-tetrahydropyridine-2,6-dicarboxylate N-acetyltransferase (236 aa).

Belongs to the transferase hexapeptide repeat family. DapH subfamily.

It catalyses the reaction (S)-2,3,4,5-tetrahydrodipicolinate + acetyl-CoA + H2O = L-2-acetamido-6-oxoheptanedioate + CoA. The protein operates within amino-acid biosynthesis; L-lysine biosynthesis via DAP pathway; LL-2,6-diaminopimelate from (S)-tetrahydrodipicolinate (acetylase route): step 1/3. Functionally, catalyzes the transfer of an acetyl group from acetyl-CoA to tetrahydrodipicolinate. The protein is 2,3,4,5-tetrahydropyridine-2,6-dicarboxylate N-acetyltransferase of Clostridium botulinum (strain 657 / Type Ba4).